We begin with the raw amino-acid sequence, 130 residues long: 3-aminoacrylate deaminase RutC (130 aa).

Belongs to the RutC family.

It carries out the reaction (Z)-3-aminoacrylate + H2O + H(+) = 3-oxopropanoate + NH4(+). Functionally, involved in pyrimidine catabolism. Catalyzes the deamination of 3-aminoacrylate to malonic semialdehyde, a reaction that can also occur spontaneously. RutC may facilitate the reaction and modulate the metabolic fitness, rather than catalyzing essential functions. This chain is 3-aminoacrylate deaminase RutC, found in Klebsiella variicola (strain At-22).